The primary structure comprises 873 residues: Probable beta-glucosidase A (873 aa).

The first 19 residues, 1–19, serve as a signal peptide directing secretion; the sequence is MRFGWLEVAALTAASVANA. Asn-71, Asn-222, and Asn-263 each carry an N-linked (GlcNAc...) asparagine glycan. Asp-291 is an active-site residue. 9 N-linked (GlcNAc...) asparagine glycosylation sites follow: Asn-326, Asn-333, Asn-365, Asn-453, Asn-534, Asn-553, Asn-575, Asn-679, and Asn-725. The disordered stretch occupies residues 731–764; that stretch reads DSSDDPNYGWQDSEYIPEGARDGSPQPLLKAGGA.

This sequence belongs to the glycosyl hydrolase 3 family.

The protein resides in the secreted. It catalyses the reaction Hydrolysis of terminal, non-reducing beta-D-glucosyl residues with release of beta-D-glucose.. It participates in glycan metabolism; cellulose degradation. Functionally, beta-glucosidases are one of a number of cellulolytic enzymes involved in the degradation of cellulosic biomass. Catalyzes the last step releasing glucose from the inhibitory cellobiose. The polypeptide is Probable beta-glucosidase A (bglA) (Aspergillus fumigatus (strain ATCC MYA-4609 / CBS 101355 / FGSC A1100 / Af293) (Neosartorya fumigata)).